Consider the following 553-residue polypeptide: Hydroxylamine reductase (553 aa).

The [2Fe-2S] cluster site is built by Cys-3, Cys-6, Cys-18, and Cys-25. Hybrid [4Fe-2O-2S] cluster contacts are provided by His-252, Glu-276, Cys-320, Cys-408, Cys-436, Cys-461, Glu-495, and Lys-497. Position 408 is a cysteine persulfide (Cys-408).

It belongs to the HCP family. Requires [2Fe-2S] cluster as cofactor. It depends on hybrid [4Fe-2O-2S] cluster as a cofactor.

It is found in the cytoplasm. The catalysed reaction is A + NH4(+) + H2O = hydroxylamine + AH2 + H(+). Catalyzes the reduction of hydroxylamine to form NH(3) and H(2)O. The sequence is that of Hydroxylamine reductase from Aliivibrio fischeri (strain ATCC 700601 / ES114) (Vibrio fischeri).